A 201-amino-acid polypeptide reads, in one-letter code: Ras-related protein Rab-9A (201 aa).

N-acetylalanine is present on alanine 2. Glycine 17, valine 18, glycine 19, lysine 20, serine 21, serine 22, aspartate 33, serine 34, histidine 38, and threonine 39 together coordinate GTP. Residue serine 21 coordinates Mg(2+). The Switch 1 signature appears at 31–42; that stretch reads KFDSQLFHTIGV. Serine 34 is subject to Phosphoserine. Residues threonine 39 and aspartate 62 each coordinate Mg(2+). A Switch 2 motif is present at residues 64 to 78; that stretch reads AGQERFRSLRTPFYR. The GTP site is built by glycine 65, asparagine 124, lysine 125, aspartate 127, alanine 155, and lysine 156. Serine 179 is subject to Phosphoserine. A Phosphothreonine modification is found at threonine 187. 2 S-geranylgeranyl cysteine lipidation sites follow: cysteine 200 and cysteine 201.

Belongs to the small GTPase superfamily. Rab family. As to quaternary structure, interacts (preferentially in its GTP-bound form) with GCC2 (via its GRIP domain). Interacts (GTP-bound form) with SGSM1; the GDP-bound form has much lower affinity for SGSM1. Interacts with SGSM2. The GTP-bound form but not the GDP-bound form interacts with HPS4. The GTP-bound form but not the GDP-bound form interacts with BLOC-3 complex (heterodimer of HPS1 and HPS4) but does not interact with HPS1 alone. Interacts (GTP-bound form) with NDE1; two RAB9A-GTP molecules lie on the opposite sides of the NDE1 homodimer; the interaction leads to RAB9A-dynein motor tethering. Interacts (GTP-bound form) with NDEL1. Mg(2+) serves as cofactor.

It localises to the cell membrane. The protein resides in the endoplasmic reticulum membrane. It is found in the golgi apparatus membrane. Its subcellular location is the late endosome. The protein localises to the cytoplasmic vesicle. It localises to the phagosome membrane. The protein resides in the phagosome. It is found in the cytoplasmic vesicle membrane. Its subcellular location is the melanosome. It catalyses the reaction GTP + H2O = GDP + phosphate + H(+). Its activity is regulated as follows. Regulated by guanine nucleotide exchange factors (GEFs) which promote the exchange of bound GDP for free GTP. Regulated by GTPase activating proteins (GAPs) which increase the GTP hydrolysis activity. Inhibited by GDP dissociation inhibitors (GDIs). In terms of biological role, the small GTPases Rab are key regulators of intracellular membrane trafficking, from the formation of transport vesicles to their fusion with membranes. Rabs cycle between an inactive GDP-bound form and an active GTP-bound form that is able to recruit to membranes different sets of downstream effectors directly responsible for vesicle formation, movement, tethering and fusion. RAB9A is involved in the transport of proteins between the endosomes and the trans-Golgi network (TGN). Specifically uses NDE1/NDEL1 as an effector to interact with the dynein motor complex in order to control retrograde trafficking of RAB9-associated late endosomes to the TGN. Involved in the recruitment of SGSM2 to melanosomes and is required for the proper trafficking of melanogenic enzymes TYR, TYRP1 and DCT/TYRP2 to melanosomes in melanocytes. In Mus musculus (Mouse), this protein is Ras-related protein Rab-9A.